The chain runs to 234 residues: Probable pectate lyase F (234 aa).

Residues 1 to 17 (MWSSIAAFPVLVPVALA) form the signal peptide.

Belongs to the polysaccharide lyase 3 family. It depends on Ca(2+) as a cofactor.

It is found in the secreted. The enzyme catalyses Eliminative cleavage of (1-&gt;4)-alpha-D-galacturonan to give oligosaccharides with 4-deoxy-alpha-D-galact-4-enuronosyl groups at their non-reducing ends.. Its function is as follows. Pectinolytic enzyme consist of four classes of enzymes: pectin lyase, polygalacturonase, pectin methylesterase and rhamnogalacturonase. Among pectinolytic enzymes, pectin lyase is the most important in depolymerization of pectin, since it cleaves internal glycosidic bonds of highly methylated pectins. Favors pectate, the anion, over pectin, the methyl ester. This is Probable pectate lyase F (plyF) from Aspergillus fumigatus (strain ATCC MYA-4609 / CBS 101355 / FGSC A1100 / Af293) (Neosartorya fumigata).